We begin with the raw amino-acid sequence, 89 residues long: Defensin-like protein 197 (89 aa).

Residues 1 to 26 form the signal peptide; sequence MKFVSVFLVLFIFFLVVLEAPEKIEA. Intrachain disulfides connect Cys33–Cys86, Cys46–Cys70, Cys55–Cys81, and Cys59–Cys83.

This sequence belongs to the DEFL family. Protease inhibitor I18 (RTI/MTI-2) subfamily.

The protein resides in the secreted. This is Defensin-like protein 197 (ATTI6) from Arabidopsis thaliana (Mouse-ear cress).